Here is a 288-residue protein sequence, read N- to C-terminus: Oxaloacetate decarboxylase (288 aa).

Serine 47 lines the substrate pocket. Aspartate 85 contributes to the Mg(2+) binding site. The substrate site is built by arginine 156 and histidine 232.

The protein belongs to the isocitrate lyase/PEP mutase superfamily. Oxaloacetate decarboxylase family. Homotetramer; dimer of dimers. The cofactor is Mg(2+).

The enzyme catalyses oxaloacetate + H(+) = pyruvate + CO2. Its function is as follows. Catalyzes the decarboxylation of oxaloacetate into pyruvate. Seems to play a role in maintaining cellular concentrations of bicarbonate and pyruvate. This is Oxaloacetate decarboxylase from Rhodopseudomonas palustris (strain ATCC BAA-98 / CGA009).